A 358-amino-acid polypeptide reads, in one-letter code: Fructose-bisphosphate aldolase 7, cytosolic (358 aa).

Serine 2 carries the N-acetylserine modification. Residue arginine 52 participates in substrate binding. Cysteine 68 bears the S-glutathionyl cysteine; transient mark. Lysine 142 is a binding site for substrate. Cysteine 173 carries the post-translational modification S-glutathionyl cysteine; transient; alternate. Cysteine 173 carries the S-nitrosocysteine; transient; alternate modification. The Proton acceptor role is filled by glutamate 183. Lysine 225 serves as the catalytic Schiff-base intermediate with dihydroxyacetone-P. 266–268 (SGI) contributes to the substrate binding site.

Belongs to the class I fructose-bisphosphate aldolase family. Homotetramer. Post-translationally, S-glutathionylated at Cys-68 and Cys-173. In terms of processing, S-nitrosylated at Cys-173. As to expression, highly expressed in flowers, and at lower levels in rosettes leaves and cauline leaves.

It localises to the cytoplasm. Its subcellular location is the cytosol. It catalyses the reaction beta-D-fructose 1,6-bisphosphate = D-glyceraldehyde 3-phosphate + dihydroxyacetone phosphate. It participates in carbohydrate degradation; glycolysis; D-glyceraldehyde 3-phosphate and glycerone phosphate from D-glucose: step 4/4. Its function is as follows. Plays a key role in glycolysis and gluconeogenesis. The polypeptide is Fructose-bisphosphate aldolase 7, cytosolic (Arabidopsis thaliana (Mouse-ear cress)).